The following is a 202-amino-acid chain: Dephospho-CoA kinase (202 aa).

In terms of domain architecture, DPCK spans 3–202 (TIGITGGIGS…TKRPNPPDRL (200 aa)). 11–16 (GSGKSV) serves as a coordination point for ATP. The tract at residues 138–161 (RAMARDGSSAETMRQRMLSQEREQ) is disordered.

It belongs to the CoaE family.

Its subcellular location is the cytoplasm. It carries out the reaction 3'-dephospho-CoA + ATP = ADP + CoA + H(+). The protein operates within cofactor biosynthesis; coenzyme A biosynthesis; CoA from (R)-pantothenate: step 5/5. Functionally, catalyzes the phosphorylation of the 3'-hydroxyl group of dephosphocoenzyme A to form coenzyme A. The polypeptide is Dephospho-CoA kinase (Porphyromonas gingivalis (strain ATCC BAA-308 / W83)).